Consider the following 248-residue polypeptide: tRNA (guanine-N(1)-)-methyltransferase (248 aa).

S-adenosyl-L-methionine-binding positions include G113 and 133 to 138; that span reads LGDFVL.

This sequence belongs to the RNA methyltransferase TrmD family. Homodimer.

Its subcellular location is the cytoplasm. It carries out the reaction guanosine(37) in tRNA + S-adenosyl-L-methionine = N(1)-methylguanosine(37) in tRNA + S-adenosyl-L-homocysteine + H(+). Its function is as follows. Specifically methylates guanosine-37 in various tRNAs. The sequence is that of tRNA (guanine-N(1)-)-methyltransferase from Albidiferax ferrireducens (strain ATCC BAA-621 / DSM 15236 / T118) (Rhodoferax ferrireducens).